The primary structure comprises 265 residues: uncharacterized protein (265 aa).

Residues 143 to 205 are a coiled coil; sequence ATQKALKDSI…EKLIKSVEKA (63 aa).

This is an uncharacterized protein from Aquifex aeolicus (strain VF5).